A 109-amino-acid chain; its full sequence is Defensin-B5 (109 aa).

Positions 1–20 (MRGLLPFLFLLSFFLSPIQA) are cleaved as a signal peptide. Residues 21–44 (QPEGREEELEETWSEDRDQAPPRV) are disordered. A propeptide spanning residues 21–70 (QPEGREEELEETWSEDRDQAPPRVVEESEVVGAENEAGLAAGRSYPWIIL) is cleaved from the precursor. Basic and acidic residues predominate over residues 34–44 (SEDRDQAPPRV). Intrachain disulfides connect Cys-73–Cys-101, Cys-80–Cys-95, and Cys-85–Cys-102. Residues 107–109 (AVP) constitute a propeptide that is removed on maturation.

The protein belongs to the beta-defensin family. Highly expressed in kidney, and expressed at lower levels in testis.

Its subcellular location is the secreted. Has antimicrobial activity. This chain is Defensin-B5, found in Ornithorhynchus anatinus (Duckbill platypus).